Here is a 614-residue protein sequence, read N- to C-terminus: ETS-related transcription factor Elf-1 (614 aa).

Phosphoserine is present on residues serine 110, serine 163, serine 167, and serine 168. The tract at residues 159–199 (TYAHSPGPSSPEQPKRKKGRKTKPPRPDSPTTTPNISVKKK) is disordered. Over residues 173-182 (KRKKGRKTKP) the composition is skewed to basic residues. Serine 187 is modified (phosphoserine). Position 190 is a phosphothreonine (threonine 190). The segment at residues 208–290 (IYLWEFLLAL…EGQRLVYQFK (83 aa)) is a DNA-binding region (ETS). The disordered stretch occupies residues 303–371 (DPSCSIESSD…VQPSEALRTV (69 aa)). Residues 310-335 (SSDPSLSSTATSSRNPASRSRASSSP) are compositionally biased toward low complexity. Phosphoserine is present on serine 430.

Belongs to the ETS family. Binds to the underphosphorylated form of RB. May interact with other transcription factors in order to regulate specific genes. Interacts with RUNX1.

The protein resides in the nucleus. Functionally, transcription factor that activates the LYN and BLK promoters. This Bos taurus (Bovine) protein is ETS-related transcription factor Elf-1 (ELF1).